Reading from the N-terminus, the 33-residue chain is Photosystem II reaction center protein Psb30 (33 aa).

Residues 5-25 (VIAQLTMLTIAVITGPLVIFF) form a helical membrane-spanning segment.

The protein belongs to the Psb30/Ycf12 family. PSII is composed of 1 copy each of membrane proteins PsbA, PsbB, PsbC, PsbD, PsbE, PsbF, PsbH, PsbI, PsbJ, PsbK, PsbL, PsbM, PsbT, PsbX, PsbY, PsbZ, Psb30/Ycf12, peripheral proteins of the oxygen-evolving complex and a large number of cofactors. It forms dimeric complexes.

The protein localises to the plastid. It is found in the chloroplast thylakoid membrane. A core subunit of photosystem II (PSII), probably helps stabilize the reaction center. In Welwitschia mirabilis (Tree tumbo), this protein is Photosystem II reaction center protein Psb30.